A 210-amino-acid polypeptide reads, in one-letter code: Putative fructokinase-8 (210 aa).

It belongs to the carbohydrate kinase PfkB family.

It catalyses the reaction D-fructose + ATP = D-fructose 6-phosphate + ADP + H(+). Its pathway is glycan biosynthesis; starch biosynthesis. Its function is as follows. May play an important role in maintaining the flux of carbon towards starch formation. This Arabidopsis thaliana (Mouse-ear cress) protein is Putative fructokinase-8.